Consider the following 479-residue polypeptide: Octopamine receptor (479 aa).

Over Met-1–Thr-57 the chain is Extracellular. N-linked (GlcNAc...) asparagine glycosylation is found at Asn-11 and Asn-16. The chain crosses the membrane as a helical span at residues Ala-58–Phe-80. Residues Thr-81 to Asn-90 are Cytoplasmic-facing. The chain crosses the membrane as a helical span at residues Phe-91 to Val-112. Topologically, residues Ala-113–Met-129 are extracellular. Residues Trp-130–Leu-150 form a helical membrane-spanning segment. Residues Asp-151–Arg-170 lie on the Cytoplasmic side of the membrane. Residues Val-171 to Trp-193 traverse the membrane as a helical segment. The Extracellular portion of the chain corresponds to Asn-194 to Ser-218. A helical membrane pass occupies residues Ser-219–Ala-240. Over Thr-241–Thr-407 the chain is Cytoplasmic. A disordered region spans residues Gly-260–Asp-319. A compositionally biased stretch (polar residues) spans Gln-274 to Gln-287. Residues Lys-299–Tyr-315 are compositionally biased toward basic residues. A helical membrane pass occupies residues Leu-408–Ile-429. Residues Pro-430–Phe-441 are Extracellular-facing. The helical transmembrane segment at Ile-442 to Ile-462 threads the bilayer. Residues Phe-463 to Cys-479 lie on the Cytoplasmic side of the membrane.

The protein belongs to the G-protein coupled receptor 1 family.

It is found in the cell membrane. Its function is as follows. Receptor for octopamine. Octopamine (OA) is a neurotransmitter, neurohormone, and neuromodulator in invertebrates. The activity of this receptor is mediated by G proteins which activate adenylyl cyclase. The sequence is that of Octopamine receptor from Bombyx mori (Silk moth).